A 406-amino-acid polypeptide reads, in one-letter code: Tryptophan synthase beta chain (406 aa).

The residue at position 97 (Lys97) is an N6-(pyridoxal phosphate)lysine.

The protein belongs to the TrpB family. As to quaternary structure, tetramer of two alpha and two beta chains. Pyridoxal 5'-phosphate is required as a cofactor.

The catalysed reaction is (1S,2R)-1-C-(indol-3-yl)glycerol 3-phosphate + L-serine = D-glyceraldehyde 3-phosphate + L-tryptophan + H2O. It functions in the pathway amino-acid biosynthesis; L-tryptophan biosynthesis; L-tryptophan from chorismate: step 5/5. Its function is as follows. The beta subunit is responsible for the synthesis of L-tryptophan from indole and L-serine. The sequence is that of Tryptophan synthase beta chain from Lacticaseibacillus paracasei (strain ATCC 334 / BCRC 17002 / CCUG 31169 / CIP 107868 / KCTC 3260 / NRRL B-441) (Lactobacillus paracasei).